Reading from the N-terminus, the 57-residue chain is uncharacterized protein (57 aa).

Its function is as follows. Proetin of unknown function whose overexpression causes growth inhibition. Overexpression increases the expression of ergosterol synthesis genes. This is an uncharacterized protein from Saccharomyces cerevisiae (strain ATCC 204508 / S288c) (Baker's yeast).